We begin with the raw amino-acid sequence, 432 residues long: Ribosomal protein uS12 methylthiotransferase RimO (432 aa).

The region spanning 4-122 (NKVDIITLGC…LISDLGKSYH (119 aa)) is the MTTase N-terminal domain. [4Fe-4S] cluster-binding residues include cysteine 13, cysteine 51, cysteine 85, cysteine 146, cysteine 150, and cysteine 153. The 232-residue stretch at 132 to 363 (TTPRHYAYVK…MRVQEGISAD (232 aa)) folds into the Radical SAM core domain. The 67-residue stretch at 366–432 (ASKVGQTFRV…AFDLYGKVLN (67 aa)) folds into the TRAM domain.

Belongs to the methylthiotransferase family. RimO subfamily. It depends on [4Fe-4S] cluster as a cofactor.

It localises to the cytoplasm. The catalysed reaction is L-aspartate(89)-[ribosomal protein uS12]-hydrogen + (sulfur carrier)-SH + AH2 + 2 S-adenosyl-L-methionine = 3-methylsulfanyl-L-aspartate(89)-[ribosomal protein uS12]-hydrogen + (sulfur carrier)-H + 5'-deoxyadenosine + L-methionine + A + S-adenosyl-L-homocysteine + 2 H(+). Its function is as follows. Catalyzes the methylthiolation of an aspartic acid residue of ribosomal protein uS12. The polypeptide is Ribosomal protein uS12 methylthiotransferase RimO (Parabacteroides distasonis (strain ATCC 8503 / DSM 20701 / CIP 104284 / JCM 5825 / NCTC 11152)).